The following is a 117-amino-acid chain: MRHKHGYRKLGRTSSHRAALLKNLTIALVNSGKIETTLPKAKELRAYVERLITRARLGDFNAHRAVFASLQNKNATNKLVTEIAPKFKDRNGGYTKIIKTRIRRGDAAEMAFIEFVA.

It belongs to the bacterial ribosomal protein bL17 family. In terms of assembly, part of the 50S ribosomal subunit. Contacts protein L32.

This Campylobacter jejuni subsp. doylei (strain ATCC BAA-1458 / RM4099 / 269.97) protein is Large ribosomal subunit protein bL17.